A 248-amino-acid polypeptide reads, in one-letter code: Indole-3-glycerol phosphate synthase (248 aa).

It belongs to the TrpC family.

The catalysed reaction is 1-(2-carboxyphenylamino)-1-deoxy-D-ribulose 5-phosphate + H(+) = (1S,2R)-1-C-(indol-3-yl)glycerol 3-phosphate + CO2 + H2O. The protein operates within amino-acid biosynthesis; L-tryptophan biosynthesis; L-tryptophan from chorismate: step 4/5. This is Indole-3-glycerol phosphate synthase from Sulfolobus acidocaldarius (strain ATCC 33909 / DSM 639 / JCM 8929 / NBRC 15157 / NCIMB 11770).